We begin with the raw amino-acid sequence, 346 residues long: Tetraacyldisaccharide 4'-kinase (346 aa).

54 to 61 is an ATP binding site; sequence TVGGAGKT.

The protein belongs to the LpxK family.

The catalysed reaction is a lipid A disaccharide + ATP = a lipid IVA + ADP + H(+). Its pathway is glycolipid biosynthesis; lipid IV(A) biosynthesis; lipid IV(A) from (3R)-3-hydroxytetradecanoyl-[acyl-carrier-protein] and UDP-N-acetyl-alpha-D-glucosamine: step 6/6. Transfers the gamma-phosphate of ATP to the 4'-position of a tetraacyldisaccharide 1-phosphate intermediate (termed DS-1-P) to form tetraacyldisaccharide 1,4'-bis-phosphate (lipid IVA). This Rhizobium etli (strain ATCC 51251 / DSM 11541 / JCM 21823 / NBRC 15573 / CFN 42) protein is Tetraacyldisaccharide 4'-kinase.